The following is a 160-amino-acid chain: Phosphopantetheine adenylyltransferase (160 aa).

Residue Thr10 participates in substrate binding. ATP is bound by residues 10–11 (TF) and His18. Residues Lys42, Leu74, and Arg88 each contribute to the substrate site. ATP is bound by residues 89–91 (GLR), Glu99, and 124–130 (NSFISST).

This sequence belongs to the bacterial CoaD family. In terms of assembly, homohexamer. Requires Mg(2+) as cofactor.

It is found in the cytoplasm. It catalyses the reaction (R)-4'-phosphopantetheine + ATP + H(+) = 3'-dephospho-CoA + diphosphate. Its pathway is cofactor biosynthesis; coenzyme A biosynthesis; CoA from (R)-pantothenate: step 4/5. Reversibly transfers an adenylyl group from ATP to 4'-phosphopantetheine, yielding dephospho-CoA (dPCoA) and pyrophosphate. This chain is Phosphopantetheine adenylyltransferase, found in Photobacterium damsela subsp. piscicida (Pasteurella piscicida).